Here is a 104-residue protein sequence, read N- to C-terminus: Inner membrane protein YjcH (104 aa).

Over 1 to 24 (MNGTIYQRIEDNAHFRELVEKRQR) the chain is Cytoplasmic. Residues 25–47 (FATILSIIMLAVYIGFILLIAFA) traverse the membrane as a helical segment. Residues 48–61 (PGWLGTPLNPNTSV) are Periplasmic-facing. The chain crosses the membrane as a helical span at residues 62–84 (TRGIPIGVGVIVISFVLTGIYIW). Residues 85-104 (RANGEFDRLNNEVLHEVQAS) lie on the Cytoplasmic side of the membrane.

Its subcellular location is the cell inner membrane. The sequence is that of Inner membrane protein YjcH (yjcH) from Escherichia coli (strain K12).